Consider the following 380-residue polypeptide: Glucose-1-phosphate adenylyltransferase (380 aa).

Alpha-D-glucose 1-phosphate is bound by residues glycine 164, 179 to 180 (EK), and serine 190.

This sequence belongs to the bacterial/plant glucose-1-phosphate adenylyltransferase family. In terms of assembly, homotetramer.

It carries out the reaction alpha-D-glucose 1-phosphate + ATP + H(+) = ADP-alpha-D-glucose + diphosphate. It functions in the pathway glycan biosynthesis; glycogen biosynthesis. Functionally, involved in the biosynthesis of ADP-glucose, a building block required for the elongation reactions to produce glycogen. Catalyzes the reaction between ATP and alpha-D-glucose 1-phosphate (G1P) to produce pyrophosphate and ADP-Glc. The polypeptide is Glucose-1-phosphate adenylyltransferase (Streptococcus pneumoniae (strain CGSP14)).